The sequence spans 355 residues: MVCCFGKKDERTKTIEKELHKERKIMRRQINLLLLGSGESGKSTFVKQMHIIHGAGEFTADEVRAYRQQIYQNAISAMRVLLDARNKLGIAWEDPKRQVEVEKVMRFTVGDLLKGIDFTTFVEVAPIISDFWNDAAIRKTYEQRNLFQISDSCQYFFEHIPRIAMPDFYPTNRDILFCRKATRGISEHIFEINKIPFRFIDVGGQRSQRQKWFQCFTDITSILFMVASNEYDQVILEDRRTNRVVESRSVFETIVNNRSFSNVSIILFMNKNDLLQEKVPKSDIRQYFTDFTGDHTLVRDVQFFLVDKFEASRRDRARPFFYHFTTAVDTENIRRVFRDVRESILEQNLKTLMMQ.

The region spanning 28–355 (RQINLLLLGS…EQNLKTLMMQ (328 aa)) is the G-alpha domain. Residues 31–44 (NLLLLGSGESGKST) form a G1 motif region. Residues 36–43 (GSGESGKS), 176–182 (LFCRKAT), 201–205 (DVGGQ), 270–273 (NKND), and A327 each bind GTP. S43 and T182 together coordinate Mg(2+). The G2 motif stretch occupies residues 174-182 (DILFCRKAT). Residues 197–206 (FRFIDVGGQR) are G3 motif. The G4 motif stretch occupies residues 266–273 (ILFMNKND). Residues 325–330 (TTAVDT) are G5 motif.

Belongs to the G-alpha family. As to quaternary structure, g proteins are composed of 3 units; alpha, beta and gamma. The alpha chain contains the guanine nucleotide binding site.

Functionally, guanine nucleotide-binding proteins (G proteins) are involved as modulators or transducers in various transmembrane signaling systems. May play a role in resistance to fungal infection in the epidermis by regulating the up-regulation of several antimicrobial peptides of the NLP and CNC families. Upstream of plc-3, egl-8, tpa-1 and the p38-like pathway, required for the expression of antimicrobial peptide nlp-29 in the epidermis in response to fungal infection or physical injury. The chain is Guanine nucleotide-binding protein alpha-12 subunit (gpa-12) from Caenorhabditis briggsae.